A 162-amino-acid chain; its full sequence is Endoribonuclease YbeY (162 aa).

The Zn(2+) site is built by H117, H121, and H127.

Belongs to the endoribonuclease YbeY family. The cofactor is Zn(2+).

Its subcellular location is the cytoplasm. Functionally, single strand-specific metallo-endoribonuclease involved in late-stage 70S ribosome quality control and in maturation of the 3' terminus of the 16S rRNA. The protein is Endoribonuclease YbeY of Francisella tularensis subsp. tularensis (strain WY96-3418).